The following is a 407-amino-acid chain: tRNA pseudouridine synthase Pus10 (407 aa).

Catalysis depends on Asp-232, which acts as the Nucleophile. Substrate contacts are provided by Tyr-300 and Tyr-369.

This sequence belongs to the pseudouridine synthase Pus10 family.

The enzyme catalyses uridine(54) in tRNA = pseudouridine(54) in tRNA. It catalyses the reaction uridine(55) in tRNA = pseudouridine(55) in tRNA. In terms of biological role, responsible for synthesis of pseudouridine from uracil-54 and uracil-55 in the psi GC loop of transfer RNAs. In Methanosphaera stadtmanae (strain ATCC 43021 / DSM 3091 / JCM 11832 / MCB-3), this protein is tRNA pseudouridine synthase Pus10.